Reading from the N-terminus, the 292-residue chain is Oxidative stress-responsive serine-rich protein 1 (292 aa).

Positions 24–178 (ASGSVASLSV…ATQVPQASLK (155 aa)) are disordered. The span at 65–83 (STRKSSRGAVRTQRRRRSK) shows a compositional bias: basic residues. T143 and T233 each carry phosphothreonine.

The chain is Oxidative stress-responsive serine-rich protein 1 (OSER1) from Homo sapiens (Human).